The sequence spans 175 residues: Ribulose bisphosphate carboxylase small subunit, chloroplastic 2 (175 aa).

The N-terminal 46 residues, 1-46 (MAPAVMASSATTVAPFQGLKSTAGLPISCRSGSTGLSSVSNGGRIR), are a transit peptide targeting the chloroplast.

The protein belongs to the RuBisCO small chain family. As to quaternary structure, heterohexadecamer of 8 large and 8 small subunits.

It is found in the plastid. It localises to the chloroplast. RuBisCO catalyzes two reactions: the carboxylation of D-ribulose 1,5-bisphosphate, the primary event in carbon dioxide fixation, as well as the oxidative fragmentation of the pentose substrate. Both reactions occur simultaneously and in competition at the same active site. Although the small subunit is not catalytic it is essential for maximal activity. The polypeptide is Ribulose bisphosphate carboxylase small subunit, chloroplastic 2 (Triticum aestivum (Wheat)).